The primary structure comprises 343 residues: Anthranilate phosphoribosyltransferase (343 aa).

5-phospho-alpha-D-ribose 1-diphosphate-binding positions include Gly78, 81-82, Thr86, 88-91, 106-114, and Ser118; these read GD, NIST, and KHGNRSVSS. Residue Gly78 participates in anthranilate binding. Residue Ser90 participates in Mg(2+) binding. An anthranilate-binding site is contributed by Asn109. Anthranilate is bound at residue Arg164. Residues Asp223 and Glu224 each coordinate Mg(2+).

The protein belongs to the anthranilate phosphoribosyltransferase family. Homodimer. Mg(2+) is required as a cofactor.

It catalyses the reaction N-(5-phospho-beta-D-ribosyl)anthranilate + diphosphate = 5-phospho-alpha-D-ribose 1-diphosphate + anthranilate. The protein operates within amino-acid biosynthesis; L-tryptophan biosynthesis; L-tryptophan from chorismate: step 2/5. Functionally, catalyzes the transfer of the phosphoribosyl group of 5-phosphorylribose-1-pyrophosphate (PRPP) to anthranilate to yield N-(5'-phosphoribosyl)-anthranilate (PRA). The polypeptide is Anthranilate phosphoribosyltransferase (Chlamydia felis (strain Fe/C-56) (Chlamydophila felis)).